A 345-amino-acid polypeptide reads, in one-letter code: Uroporphyrinogen decarboxylase (345 aa).

Substrate-binding positions include 24–28 (RQAGR), Asp74, Tyr150, Ser205, and His318.

Belongs to the uroporphyrinogen decarboxylase family. As to quaternary structure, homodimer.

Its subcellular location is the cytoplasm. It carries out the reaction uroporphyrinogen III + 4 H(+) = coproporphyrinogen III + 4 CO2. Its pathway is porphyrin-containing compound metabolism; protoporphyrin-IX biosynthesis; coproporphyrinogen-III from 5-aminolevulinate: step 4/4. In terms of biological role, catalyzes the decarboxylation of four acetate groups of uroporphyrinogen-III to yield coproporphyrinogen-III. This Dichelobacter nodosus (strain VCS1703A) protein is Uroporphyrinogen decarboxylase.